A 155-amino-acid polypeptide reads, in one-letter code: Ribosome maturation factor RimP (155 aa).

Belongs to the RimP family.

It localises to the cytoplasm. Functionally, required for maturation of 30S ribosomal subunits. The sequence is that of Ribosome maturation factor RimP from Prochlorococcus marinus (strain AS9601).